The primary structure comprises 582 residues: Proline--tRNA ligase (582 aa).

It belongs to the class-II aminoacyl-tRNA synthetase family. ProS type 1 subfamily. In terms of assembly, homodimer.

Its subcellular location is the cytoplasm. It catalyses the reaction tRNA(Pro) + L-proline + ATP = L-prolyl-tRNA(Pro) + AMP + diphosphate. Catalyzes the attachment of proline to tRNA(Pro) in a two-step reaction: proline is first activated by ATP to form Pro-AMP and then transferred to the acceptor end of tRNA(Pro). As ProRS can inadvertently accommodate and process non-cognate amino acids such as alanine and cysteine, to avoid such errors it has two additional distinct editing activities against alanine. One activity is designated as 'pretransfer' editing and involves the tRNA(Pro)-independent hydrolysis of activated Ala-AMP. The other activity is designated 'posttransfer' editing and involves deacylation of mischarged Ala-tRNA(Pro). The misacylated Cys-tRNA(Pro) is not edited by ProRS. This Mycobacterium avium (strain 104) protein is Proline--tRNA ligase.